We begin with the raw amino-acid sequence, 239 residues long: Exosome complex exonuclease RRP46 homolog (239 aa).

M1 carries the post-translational modification N-acetylmethionine.

Belongs to the RNase PH family. In terms of assembly, probable component of the RNA exosome complex.

It localises to the nucleus. It is found in the nucleolus. In terms of biological role, probable component of the exosome 3'-&gt;5' exoribonuclease complex, a complex that degrades inherently unstable mRNAs containing AU-rich elements (AREs) within their 3'-untranslated regions. The protein is Exosome complex exonuclease RRP46 homolog of Arabidopsis thaliana (Mouse-ear cress).